A 327-amino-acid polypeptide reads, in one-letter code: Altered inheritance rate of mitochondria protein 25 (327 aa).

The protein belongs to the phospholipid scramblase family.

Its subcellular location is the mitochondrion. The sequence is that of Altered inheritance rate of mitochondria protein 25 (AIM25) from Saccharomyces cerevisiae (strain ATCC 204508 / S288c) (Baker's yeast).